The chain runs to 287 residues: Cell division protein ZipA (287 aa).

Met-1 is a topological domain (periplasmic). A helical membrane pass occupies residues 2–22 (EIGLREWLIVIGIIVIAGILF). Residues 23-287 (DGWRRMRGGK…FERRALTQKR (265 aa)) are Cytoplasmic-facing. Positions 70–143 (LDEHDLPSMS…APRQSVNDQP (74 aa)) are disordered.

It belongs to the ZipA family. In terms of assembly, interacts with FtsZ via their C-terminal domains.

It localises to the cell inner membrane. In terms of biological role, essential cell division protein that stabilizes the FtsZ protofilaments by cross-linking them and that serves as a cytoplasmic membrane anchor for the Z ring. Also required for the recruitment to the septal ring of downstream cell division proteins. The protein is Cell division protein ZipA of Pseudomonas fluorescens (strain SBW25).